The chain runs to 167 residues: 2-C-methyl-D-erythritol 2,4-cyclodiphosphate synthase (167 aa).

A divalent metal cation-binding residues include Asp-9 and His-11. Residues 9–11 (DVH) and 35–36 (HS) contribute to the 4-CDP-2-C-methyl-D-erythritol 2-phosphate site. Residue His-43 coordinates a divalent metal cation. Residues 57–59 (DIG), 62–66 (FPDTD), 133–136 (TTTE), Phe-140, and Arg-143 contribute to the 4-CDP-2-C-methyl-D-erythritol 2-phosphate site.

The protein belongs to the IspF family. Homotrimer. A divalent metal cation serves as cofactor.

The catalysed reaction is 4-CDP-2-C-methyl-D-erythritol 2-phosphate = 2-C-methyl-D-erythritol 2,4-cyclic diphosphate + CMP. The protein operates within isoprenoid biosynthesis; isopentenyl diphosphate biosynthesis via DXP pathway; isopentenyl diphosphate from 1-deoxy-D-xylulose 5-phosphate: step 4/6. Its function is as follows. Involved in the biosynthesis of isopentenyl diphosphate (IPP) and dimethylallyl diphosphate (DMAPP), two major building blocks of isoprenoid compounds. Catalyzes the conversion of 4-diphosphocytidyl-2-C-methyl-D-erythritol 2-phosphate (CDP-ME2P) to 2-C-methyl-D-erythritol 2,4-cyclodiphosphate (ME-CPP) with a corresponding release of cytidine 5-monophosphate (CMP). This chain is 2-C-methyl-D-erythritol 2,4-cyclodiphosphate synthase, found in Glaesserella parasuis serovar 5 (strain SH0165) (Haemophilus parasuis).